A 171-amino-acid chain; its full sequence is Non-specific lipid transfer protein GPI-anchored 19 (171 aa).

Positions 1–18 are cleaved as a signal peptide; that stretch reads MILAILALVIATFLYGGA. 4 cysteine pairs are disulfide-bonded: Cys-25-Cys-66, Cys-35-Cys-50, Cys-51-Cys-93, and Cys-64-Cys-103. Residues Asn-72 and Asn-82 are each glycosylated (N-linked (GlcNAc...) asparagine). The interval 113 to 149 is disordered; it reads LPANTPVGSPRSAPSPSGTTSPANTPSGSKKFPLSNE. The segment covering 118 to 141 has biased composition (low complexity); that stretch reads PVGSPRSAPSPSGTTSPANTPSGS. Residue Ser-147 is the site of GPI-anchor amidated serine attachment. N-linked (GlcNAc...) asparagine glycosylation occurs at Asn-148. A propeptide spans 148-171 (removed in mature form); it reads NESSSKSNVIILSFVSIALVLAII.

Belongs to the plant LTP family.

The protein localises to the cell membrane. Functionally, probable lipid transfer protein. In Arabidopsis thaliana (Mouse-ear cress), this protein is Non-specific lipid transfer protein GPI-anchored 19.